Here is a 156-residue protein sequence, read N- to C-terminus: MFNVILVAPEIPPNTGNVIRLCANTGARLHLIEPLGFPLDDAKMRRAGLDYHEYAEMRVHRDWDAFVAAEAPDPARMFAFTTRGSGRFHDHAFVPGDWFVFGSETRGLPADVLERFPNEQRVRLPMRPGNRSLNLSNTVAVVVFEAWRQAGFEGGA.

S-adenosyl-L-methionine contacts are provided by glycine 102, leucine 124, and serine 132.

Belongs to the class IV-like SAM-binding methyltransferase superfamily. RNA methyltransferase TrmH family. TrmL subfamily. Homodimer.

The protein resides in the cytoplasm. It catalyses the reaction cytidine(34) in tRNA + S-adenosyl-L-methionine = 2'-O-methylcytidine(34) in tRNA + S-adenosyl-L-homocysteine + H(+). It carries out the reaction 5-carboxymethylaminomethyluridine(34) in tRNA(Leu) + S-adenosyl-L-methionine = 5-carboxymethylaminomethyl-2'-O-methyluridine(34) in tRNA(Leu) + S-adenosyl-L-homocysteine + H(+). Its function is as follows. Methylates the ribose at the nucleotide 34 wobble position in the two leucyl isoacceptors tRNA(Leu)(CmAA) and tRNA(Leu)(cmnm5UmAA). Catalyzes the methyl transfer from S-adenosyl-L-methionine to the 2'-OH of the wobble nucleotide. This Burkholderia ambifaria (strain ATCC BAA-244 / DSM 16087 / CCUG 44356 / LMG 19182 / AMMD) (Burkholderia cepacia (strain AMMD)) protein is tRNA (cytidine(34)-2'-O)-methyltransferase.